The chain runs to 514 residues: Variant surface glycoprotein ILTAT 1.24 (514 aa).

The signal sequence occupies residues 1-23 (MVYRNILQLSVLKVLLIVLIVEA). Intrachain disulfides connect Cys37–Cys162 and Cys143–Cys204. Asn443 is a glycosylation site (N-linked (GlcNAc...) asparagine). Residues 451–476 (GVPVTQTQTAGADTTAEKCKGKGEKD) are disordered. Residues 455-464 (TQTQTAGADT) are compositionally biased toward low complexity. Over residues 465-476 (TAEKCKGKGEKD) the composition is skewed to basic and acidic residues. The GPI-anchor amidated aspartate moiety is linked to residue Asp491. The propeptide at 492 to 514 (SSILANKQFALSVASAAFVALLF) is removed in mature form.

The protein localises to the cell membrane. In terms of biological role, VSG forms a coat on the surface of the parasite. The trypanosome evades the immune response of the host by expressing a series of antigenically distinct VSGs from an estimated 1000 VSG genes. The chain is Variant surface glycoprotein ILTAT 1.24 from Trypanosoma brucei brucei.